The following is a 207-amino-acid chain: Ras-related protein Rab-8A (207 aa).

Residues S17, G18, V19, G20, K21, T22, C23, S35, S39, and T40 each contribute to the GTP site. T22 provides a ligand contact to Mg(2+). 2 short sequence motifs (switch) span residues 31-45 (DAFN…GIDF) and 63-80 (DTAG…YYRG). Mg(2+) is bound by residues T40 and D63. G66 serves as a coordination point for GTP. Residue T72 is modified to Phosphothreonine. GTP-binding residues include N121, K122, D124, A152, and K153. Residues S181 and S185 each carry the phosphoserine modification. A Cysteine methyl ester modification is found at C204. C204 carries the S-geranylgeranyl cysteine lipid modification. Residues 205–207 (VLL) constitute a propeptide, removed in mature form.

The protein belongs to the small GTPase superfamily. Rab family. In terms of assembly, interacts (GTP-bound form) with MICALL1; regulates RAB8A association with recycling endosomes. Interacts with MICALL2; competes with RAB13 and is involved in E-cadherin endocytic recycling. Interacts (GTP-bound form) with MICAL1, MICALCL, MICAL3, EHBP1 and EHBP1L1; at least in case of MICAL1, MICALCL, MICAL3 and EHBP1L1 two molecules of RAB8A can bind to one molecule of the effector protein; ternary complexes of RAB8A, RAB13 and either MICAL1 or EHBP1L1 are possible. Interacts with EHD1. Interacts with MAP4K2 and SYTL4. Interacts with SGSM1 and SGSM3. Interacts with RABIF, RIMS2, RPH3A and RPH3A. Interacts with OPTN. Interacts with RAB3IP, RAB3IP functions as guanine exchange factor (GEF). Interacts with MYO5B. Interacts with CIMAP3. Interacts with BIRC6/bruce. Interacts with OCRL. Interacts with AHI1. Interacts with DCDC1. Interacts with LRRK2; interaction facilitates phosphorylation of Thr-72. Interacts with RAB31P, GDI1, GDI2, CHM, CHML, RABGGTA, RABGGTB, TBC1D15 and INPP5B; these interactions are dependent on Thr-72 not being phosphorylated. Interacts with RILPL1 and RILPL2; these interactions are dependent on the phosphorylation of Thr-72 by LRRK2. Interacts with DZIP1; prevents inhibition by the GDP-dissociation inhibitor GDI2. Interacts (in GDP-bound form) with RAB3IP/Rabin8, RAB3IP functions as guanine exchange factor (GEF) towards RAB8A. Interacts (in GDP-bound form) with RPGR, RPGR functions as GEF towards RAB8A. The cofactor is Mg(2+). Post-translationally, phosphorylation of Thr-72 in the switch II region by LRRK2 prevents the association of RAB regulatory proteins, including CHM, CHML and RAB GDP dissociation inhibitors GDI1 and GDI2. Phosphorylation by LRRK2 is required for localization to stressed lysosomes.

It is found in the cell membrane. The protein localises to the golgi apparatus. The protein resides in the endosome membrane. It localises to the recycling endosome membrane. Its subcellular location is the cell projection. It is found in the cilium. The protein localises to the cytoplasmic vesicle. The protein resides in the phagosome membrane. It localises to the cytoplasm. Its subcellular location is the cytoskeleton. It is found in the microtubule organizing center. The protein localises to the centrosome. The protein resides in the centriole. It localises to the cilium basal body. Its subcellular location is the midbody. It is found in the lysosome. The enzyme catalyses GTP + H2O = GDP + phosphate + H(+). Its activity is regulated as follows. Regulated by guanine nucleotide exchange factors (GEFs) such as RAB3IP/Rabin8 and RPGR which promote the exchange of bound GDP for free GTP, GTPase activating proteins (GAPs) which increase the GTP hydrolysis activity, and GDP dissociation inhibitors (GDIs) which inhibit the dissociation of the nucleotide from the GTPase. Activated in response to insulin. Its function is as follows. The small GTPases Rab are key regulators of intracellular membrane trafficking, from the formation of transport vesicles to their fusion with membranes. Rabs cycle between an inactive GDP-bound form and an active GTP-bound form that is able to recruit to membranes different sets of downstream effectors directly responsible for vesicle formation, movement, tethering and fusion. RAB8A is involved in polarized vesicular trafficking and neurotransmitter release. Together with RAB11A, RAB3IP, the exocyst complex, PARD3, PRKCI, ANXA2, CDC42 and DNMBP promotes transcytosis of PODXL to the apical membrane initiation sites (AMIS), apical surface formation and lumenogenesis. Regulates the compacted morphology of the Golgi. Together with MYO5B and RAB11A participates in epithelial cell polarization. Also involved in membrane trafficking to the cilium and ciliogenesis. Together with MICALL2, may also regulate adherens junction assembly. May play a role in insulin-induced transport to the plasma membrane of the glucose transporter GLUT4 and therefore play a role in glucose homeostasis. Involved in autophagy. Participates in the export of a subset of neosynthesized proteins through a Rab8-Rab10-Rab11-dependent endososomal export route. Targeted to and stabilized on stressed lysosomes through LRRK2 phosphorylation. Suppresses stress-induced lysosomal enlargement through EHBP1 and EHNP1L1 effector proteins. The polypeptide is Ras-related protein Rab-8A (RAB8A) (Pongo abelii (Sumatran orangutan)).